Here is a 569-residue protein sequence, read N- to C-terminus: Urease subunit beta (569 aa).

The region spanning 131–569 is the Urease domain; that stretch reads GGIDTHIHFI…VSLAQLFSIF (439 aa). Residues H136, H138, and K219 each coordinate Ni(2+). N6-carboxylysine is present on K219. Residue H221 participates in substrate binding. Ni(2+) contacts are provided by H248 and H274. Catalysis depends on H322, which acts as the Proton donor. Position 362 (D362) interacts with Ni(2+).

This sequence belongs to the metallo-dependent hydrolases superfamily. Urease alpha subunit family. In terms of assembly, heterohexamer of 3 UreA (alpha) and 3 UreB (beta) subunits. Ni cation is required as a cofactor. In terms of processing, carboxylation allows a single lysine to coordinate two nickel ions.

The protein localises to the cytoplasm. It carries out the reaction urea + 2 H2O + H(+) = hydrogencarbonate + 2 NH4(+). The protein operates within nitrogen metabolism; urea degradation; CO(2) and NH(3) from urea (urease route): step 1/1. The chain is Urease subunit beta from Helicobacter pylori (strain P12).